A 309-amino-acid polypeptide reads, in one-letter code: Isethionate sulfite-lyase activating enzyme (309 aa).

Positions 22-309 constitute a Radical SAM core domain; it reads HDGPGIRTVV…VVAAEHATDG (288 aa). [4Fe-4S] cluster contacts are provided by Cys36, Cys40, Cys43, Cys62, Cys68, Cys71, Cys75, Cys95, Cys98, Cys102, and Cys106. Position 42 to 44 (42 to 44) interacts with S-adenosyl-L-methionine; that stretch reads WCS. 4Fe-4S ferredoxin-type domains lie at 53 to 85 and 86 to 117; these read IELAYNTGRCLTLTKCVRCVEVCTMNAITRADD and DTISIDRALCEECGMFCAEACPSKALITYGTT. S-adenosyl-L-methionine is bound by residues Gly146, 195-197, and His268; that span reads DIK.

The protein belongs to the organic radical-activating enzymes family. Monomer. The cofactor is [4Fe-4S] cluster.

The catalysed reaction is glycyl-[protein] + reduced [flavodoxin] + S-adenosyl-L-methionine = glycin-2-yl radical-[protein] + semiquinone [flavodoxin] + 5'-deoxyadenosine + L-methionine + H(+). It functions in the pathway organosulfur degradation; alkanesulfonate degradation. Involved in an anaerobic respiration pathway that converts the sulfonate isethionate (2-hydroxyethanesulfonate) to ammonia, acetate and sulfide. Catalyzes activation of the isethionate sulfite-lyase IslA under anaerobic conditions by generation of an organic free radical on a glycine residue, via a homolytic cleavage of S-adenosyl-L-methionine (SAM). The protein is Isethionate sulfite-lyase activating enzyme of Oleidesulfovibrio alaskensis (strain ATCC BAA-1058 / DSM 17464 / G20) (Desulfovibrio alaskensis).